We begin with the raw amino-acid sequence, 104 residues long: Cell division protein FtsL (104 aa).

At 1–20 (MSKPSLTLPRIVLHDLWQHK) the chain is on the cytoplasmic side. The chain crosses the membrane as a helical span at residues 21–43 (WILLLALLVLSNAVAVVYTSHVS). Residues 44-104 (RKLTTEWDQL…PSEEIVVKVP (61 aa)) lie on the Periplasmic side of the membrane.

This sequence belongs to the FtsL family. Part of a complex composed of FtsB, FtsL and FtsQ.

Its subcellular location is the cell inner membrane. In terms of biological role, essential cell division protein. May link together the upstream cell division proteins, which are predominantly cytoplasmic, with the downstream cell division proteins, which are predominantly periplasmic. The polypeptide is Cell division protein FtsL (Shewanella oneidensis (strain ATCC 700550 / JCM 31522 / CIP 106686 / LMG 19005 / NCIMB 14063 / MR-1)).